Here is a 982-residue protein sequence, read N- to C-terminus: Glutamate [NMDA] receptor subunit 1 (982 aa).

Residues 1–22 (MRVAFIYRWLLCGAAIVNVLVA) form the signal peptide. The Extracellular segment spans residues 23-568 (QRHTASDNPS…TLVSFLQPFS (546 aa)). 7 N-linked (GlcNAc...) asparagine glycosylation sites follow: asparagine 253, asparagine 309, asparagine 340, asparagine 392, asparagine 449, asparagine 476, and asparagine 496. Residues 525-527 (PLT) and arginine 532 each bind glycine. A helical transmembrane segment spans residues 569–589 (NTLWILVMVSVHVVALVLYLL). Residues 590–646 (DRFSPFGRFKLSHSDSNEEKALNLSSAVWFAWGVLLNSGIGEGTPRSFSARVLGMVW) are Cytoplasmic-facing. The chain crosses the membrane as a helical span at residues 647 to 667 (AGFAMIIVASYTANLAAFLVL). The Extracellular portion of the chain corresponds to 668–826 (ERPKTKLSGI…KTPNTLGLKN (159 aa)). The N-linked (GlcNAc...) asparagine glycan is linked to asparagine 688. The glycine site is built by serine 698 and aspartate 742. Residues 827 to 847 (MAGVFILVGVGIAGGVGLIII) form a helical membrane-spanning segment. Residues 848 to 982 (EVIYKKHQVK…YTSDVSHLVV (135 aa)) lie on the Cytoplasmic side of the membrane. Residues 948–982 (LTASQLGLGKTRPQQNPLPPRYSPGYTSDVSHLVV) are disordered. The segment covering 972 to 982 (GYTSDVSHLVV) has biased composition (polar residues).

It belongs to the glutamate-gated ion channel (TC 1.A.10.1) family. Forms a heteromeric NMDA channel with Nmdar2.

The protein resides in the cell membrane. The protein localises to the postsynaptic cell membrane. It localises to the postsynaptic density. Its function is as follows. NMDA receptor subtype of glutamate-gated ion channels with high calcium permeability and voltage-dependent sensitivity to magnesium. Mediated by glycine. This protein plays a key role in synaptic plasticity, synaptogenesis, excitotoxicity, memory acquisition and learning. It mediates neuronal functions in glutamate neurotransmission. Is involved in the cell surface targeting of NMDA receptors. Plays a role in associative learning and in long-term memory consolidation. The chain is Glutamate [NMDA] receptor subunit 1 from Drosophila grimshawi (Hawaiian fruit fly).